Here is a 444-residue protein sequence, read N- to C-terminus: ATPase PAAT (444 aa).

Phosphoserine occurs at positions 177, 182, and 254. A disordered region spans residues 279–300 (SAQPSGEGNTTNHDEGHLMPQN). The span at 280–289 (AQPSGEGNTT) shows a compositional bias: polar residues. The residue at position 302 (serine 302) is a Phosphoserine. The disordered stretch occupies residues 424–444 (PPPGMPLRHYDSRERLSNGER). The segment covering 431-444 (RHYDSRERLSNGER) has biased composition (basic and acidic residues).

Homodimer. Interacts with ABCB7, ABCB8/MITOSUR and ABCB10.

It localises to the cytoplasm. Its subcellular location is the mitochondrion. It catalyses the reaction ATP + H2O = ADP + phosphate + H(+). ATPase that regulates mitochondrial ABC transporters ABCB7, ABCB8/MITOSUR and ABCB10. Regulates mitochondrial ferric concentration and heme biosynthesis and plays a role in the maintenance of mitochondrial homeostasis and cell survival. The polypeptide is ATPase PAAT (Mus musculus (Mouse)).